The sequence spans 715 residues: Polyribonucleotide nucleotidyltransferase (715 aa).

The Mg(2+) site is built by aspartate 487 and aspartate 493. The region spanning 554–613 is the KH domain; that stretch reads PRIETFKIATDKIREVIGTGGKVIREIVEKTGAKVNIDDDGTVKVASSDGESIKAAIKWI. In terms of domain architecture, S1 motif spans 623–691; it reads NAIYDGTVVK…DRGKTRLSMK (69 aa). Residues 696 to 715 are disordered; it reads ETGEDLEAKQKAAEGATAAE.

Belongs to the polyribonucleotide nucleotidyltransferase family. Mg(2+) serves as cofactor.

The protein localises to the cytoplasm. It carries out the reaction RNA(n+1) + phosphate = RNA(n) + a ribonucleoside 5'-diphosphate. Its function is as follows. Involved in mRNA degradation. Catalyzes the phosphorolysis of single-stranded polyribonucleotides processively in the 3'- to 5'-direction. This is Polyribonucleotide nucleotidyltransferase from Rhodopseudomonas palustris (strain BisB18).